The sequence spans 506 residues: Transcription factor CP2 (506 aa).

Residues E61–S300 enclose the Grh/CP2 DB domain. Residues E133–V395 are DNA-binding. 2 disordered regions span residues F238–S268 and S291–P316. Residues K241–Y265 show a composition bias toward basic and acidic residues. Residues S291–S300 show a composition bias toward polar residues.

It belongs to the grh/CP2 family. CP2 subfamily. In terms of assembly, component of the SSP (stage selector protein) complex, which appears to be a heteromer of TFCP2 and 2 copies of NFE4.

It is found in the nucleus. Functionally, may function as a transcription factor. The sequence is that of Transcription factor CP2 (tfcp2) from Xenopus laevis (African clawed frog).